The chain runs to 34 residues: DDIT3 upstream open reading frame protein (34 aa).

As to quaternary structure, interacts with DDIT3 (isoform 1).

It localises to the nucleus. The protein localises to the cytoplasm. In terms of biological role, product of the upstream open reading frame (uORF) of DDIT3/CHOP that is specifically produced in absence of stress, thereby preventing translation of downstream stress effector DDIT3/CHOP. The polypeptide is DDIT3 upstream open reading frame protein (Homo sapiens (Human)).